The primary structure comprises 688 residues: Glycine--tRNA ligase beta subunit (688 aa).

It belongs to the class-II aminoacyl-tRNA synthetase family. As to quaternary structure, tetramer of two alpha and two beta subunits.

Its subcellular location is the cytoplasm. The enzyme catalyses tRNA(Gly) + glycine + ATP = glycyl-tRNA(Gly) + AMP + diphosphate. The protein is Glycine--tRNA ligase beta subunit of Listeria monocytogenes serotype 4b (strain CLIP80459).